A 207-amino-acid chain; its full sequence is uncharacterized protein (207 aa).

To M.leprae ML1660.

This is an uncharacterized protein from Mycobacterium tuberculosis (strain CDC 1551 / Oshkosh).